A 360-amino-acid chain; its full sequence is Sensor histidine kinase LiaS (360 aa).

The Cytoplasmic segment spans residues 1-15 (MRKKMLASLQWRAIR). A helical transmembrane segment spans residues 16–36 (MTTGISLLLFVCLISFMMFYY). Residues 37–47 (RLDPLVLLSSS) are Extracellular-facing. Residues 48-68 (WFGIPFILILLLISVTVGFAS) traverse the membrane as a helical segment. Residues 69–360 (GYMYGNRLKT…ENERDSSIID (292 aa)) lie on the Cytoplasmic side of the membrane. The 53-residue stretch at 74–126 (NRLKTRIDTLIESILTFENGNFAYRIPPLGDDEIGLAADQLNEMAKRVELQVA) folds into the HAMP domain. The Histidine kinase domain occupies 153-346 (RLARDLHDAV…QIEVKVPIFP (194 aa)). A Phosphohistidine; by autocatalysis modification is found at histidine 159.

The protein localises to the cell membrane. The catalysed reaction is ATP + protein L-histidine = ADP + protein N-phospho-L-histidine.. Its function is as follows. Member of the two-component regulatory system LiaS/LiaR probably involved in response to a subset of cell wall-active antibiotics that interfere with the lipid II cycle in the cytoplasmic membrane (bacitracin, nisin, ramoplanin and vancomycin). Also seems to be involved in response to cationic antimicrobial peptides and secretion stress. Activates probably LiaR by phosphorylation. The sequence is that of Sensor histidine kinase LiaS (liaS) from Bacillus subtilis (strain 168).